The primary structure comprises 259 residues: Oxaloacetate tautomerase FMP41, mitochondrial (259 aa).

Mg(2+) is bound by residues glutamate 87, glutamate 89, and aspartate 121.

This sequence belongs to the FAH family. Requires Mg(2+) as cofactor. The cofactor is Mn(2+).

The protein localises to the mitochondrion. The catalysed reaction is oxaloacetate = enol-oxaloacetate. Functionally, tautomerase that converts enol-oxaloacetate, a strong inhibitor of succinate dehydrogenase, to the physiological keto form of oxaloacetate. This is Oxaloacetate tautomerase FMP41, mitochondrial from Saccharomyces cerevisiae (strain ATCC 204508 / S288c) (Baker's yeast).